The following is a 231-amino-acid chain: Ureidoacrylate amidohydrolase RutB (231 aa).

The active-site Proton acceptor is the aspartate 25. Lysine 134 is a catalytic residue. The active-site Nucleophile is the cysteine 167.

This sequence belongs to the isochorismatase family. RutB subfamily.

The catalysed reaction is (Z)-3-ureidoacrylate + H2O + H(+) = (Z)-3-aminoacrylate + NH4(+) + CO2. It carries out the reaction (Z)-3-ureidoacrylate + H2O = (Z)-3-aminoacrylate + carbamate + H(+). The enzyme catalyses (Z)-2-methylureidoacrylate + H2O + H(+) = (Z)-2-methylaminoacrylate + NH4(+) + CO2. Hydrolyzes ureidoacrylate to form aminoacrylate and carbamate. The carbamate hydrolyzes spontaneously, thereby releasing one of the nitrogen atoms of the pyrimidine ring as ammonia and one of its carbon atoms as CO2. This is Ureidoacrylate amidohydrolase RutB from Escherichia coli O139:H28 (strain E24377A / ETEC).